A 348-amino-acid chain; its full sequence is Nuclear receptor subfamily 1 group I member 3 (348 aa).

A DNA-binding region (nuclear receptor) is located at residues 8–83 (PRSCMVCGDR…AGMKKEMILS (76 aa)). The segment at 11–31 (CMVCGDRATGYHFHALTCEGC) adopts an NR C4-type zinc-finger fold. Residue Thr38 is modified to Phosphothreonine; by PKC. The segment at 47–71 (CPFAGSCKVNKAQRRHCPACRLQKC) adopts an NR C4-type zinc-finger fold. Residues 109–348 (GQQELVQTLL…MMPLLQEICS (240 aa)) enclose the NR LBD domain.

It belongs to the nuclear hormone receptor family. NR1 subfamily. In terms of assembly, heterodimer of NR1I3 and RXR. Interacts with PSMC4. Interacts with ECT2. Directly interacts with DNAJC7; this complex may also include HSP90. Interacts with CRY1. Interacts with CRY2 in a ligand-dependent manner. In terms of processing, phosphorylated at Thr-38 by PKC, dephosphorylation of Thr-38 is required for nuclear translocation and activation.

It localises to the nucleus. It is found in the cytoplasm. The protein localises to the cytoskeleton. Binds and transactivates the retinoic acid response elements that control expression of the retinoic acid receptor beta 2 and alcohol dehydrogenase 3 genes. Transactivates both the phenobarbital responsive element module of the human CYP2B6 gene and the CYP3A4 xenobiotic response element. This chain is Nuclear receptor subfamily 1 group I member 3 (NR1I3), found in Pusa sibirica (Baikal seal).